A 158-amino-acid polypeptide reads, in one-letter code: Protein EOLA2 (158 aa).

Residues 6-92 (LSFRQPYAGF…IAGLVDIGET (87 aa)) form the ASCH domain.

This sequence belongs to the EOLA family.

The chain is Protein EOLA2 from Homo sapiens (Human).